The chain runs to 204 residues: Small ribosomal subunit protein uS4 (204 aa).

The interval glycine 21–serine 45 is disordered. The region spanning arginine 93–valine 156 is the S4 RNA-binding domain.

It belongs to the universal ribosomal protein uS4 family. Part of the 30S ribosomal subunit. Contacts protein S5. The interaction surface between S4 and S5 is involved in control of translational fidelity.

Its function is as follows. One of the primary rRNA binding proteins, it binds directly to 16S rRNA where it nucleates assembly of the body of the 30S subunit. In terms of biological role, with S5 and S12 plays an important role in translational accuracy. This chain is Small ribosomal subunit protein uS4, found in Acidiphilium cryptum (strain JF-5).